We begin with the raw amino-acid sequence, 217 residues long: Kunitz-type trypsin inhibitor-like 1 protein (217 aa).

Positions 1–26 (MKPLSPLTLSFFLFVFITNLSLAFSN) are cleaved as a signal peptide. 2 disulfides stabilise this stretch: C70–C115 and C168–C175. Residue N191 is glycosylated (N-linked (GlcNAc...) asparagine).

This sequence belongs to the protease inhibitor I3 (leguminous Kunitz-type inhibitor) family. Expressed in roots, leaves, epidermal layers of elongating stems, meristems and in the vascular system.

Its subcellular location is the secreted. Might act as a protease inhibitor involved in plant defense responses. In Pisum sativum (Garden pea), this protein is Kunitz-type trypsin inhibitor-like 1 protein (PIP20-1).